A 154-amino-acid polypeptide reads, in one-letter code: MKKILLLNGPNLNMLGKREPHIYGSQTLSDIEQHLQQSAQAQGYELDYFQANGEESLINRIHQAFQNTDFIIINPGAFTHTSVAIRDALLAVSIPFIEVHLSNVHAREPFRHHSYLSDVAKGVICGLGAKGYDYALDFAISELQKIQLGEMMNG.

The Proton acceptor role is filled by Tyr23. The substrate site is built by Asn74, His80, and Asp87. His100 functions as the Proton donor in the catalytic mechanism. Substrate-binding positions include 101–102 and Arg111; that span reads LS.

Belongs to the type-II 3-dehydroquinase family. As to quaternary structure, homododecamer.

The catalysed reaction is 3-dehydroquinate = 3-dehydroshikimate + H2O. Its pathway is metabolic intermediate biosynthesis; chorismate biosynthesis; chorismate from D-erythrose 4-phosphate and phosphoenolpyruvate: step 3/7. Catalyzes a trans-dehydration via an enolate intermediate. The polypeptide is 3-dehydroquinate dehydratase (Actinobacillus pleuropneumoniae serotype 5b (strain L20)).